Here is a 147-residue protein sequence, read N- to C-terminus: 3-dehydroquinate dehydratase (147 aa).

The active-site Proton acceptor is Tyr23. Positions 74, 80, and 87 each coordinate substrate. Residue His100 is the Proton donor of the active site. Residues 101-102 and Arg111 contribute to the substrate site; that span reads LS.

This sequence belongs to the type-II 3-dehydroquinase family. In terms of assembly, homododecamer.

The enzyme catalyses 3-dehydroquinate = 3-dehydroshikimate + H2O. Its pathway is metabolic intermediate biosynthesis; chorismate biosynthesis; chorismate from D-erythrose 4-phosphate and phosphoenolpyruvate: step 3/7. Catalyzes a trans-dehydration via an enolate intermediate. The polypeptide is 3-dehydroquinate dehydratase (Clostridium botulinum (strain Kyoto / Type A2)).